Reading from the N-terminus, the 546-residue chain is Glutamate--tRNA ligase (546 aa).

The short motif at Pro41–Gly51 is the 'HIGH' region element. Positions Lys293–Arg297 match the 'KMSKS' region motif. Lys296 serves as a coordination point for ATP.

This sequence belongs to the class-I aminoacyl-tRNA synthetase family. Glutamate--tRNA ligase type 1 subfamily. As to quaternary structure, monomer.

Its subcellular location is the cytoplasm. The enzyme catalyses tRNA(Glu) + L-glutamate + ATP = L-glutamyl-tRNA(Glu) + AMP + diphosphate. Functionally, catalyzes the attachment of glutamate to tRNA(Glu) in a two-step reaction: glutamate is first activated by ATP to form Glu-AMP and then transferred to the acceptor end of tRNA(Glu). This is Glutamate--tRNA ligase from Clostridium perfringens (strain 13 / Type A).